The chain runs to 161 residues: Large ribosomal subunit protein uL10 (161 aa).

This sequence belongs to the universal ribosomal protein uL10 family. Part of the ribosomal stalk of the 50S ribosomal subunit. The N-terminus interacts with L11 and the large rRNA to form the base of the stalk. The C-terminus forms an elongated spine to which L12 dimers bind in a sequential fashion forming a multimeric L10(L12)X complex.

Functionally, forms part of the ribosomal stalk, playing a central role in the interaction of the ribosome with GTP-bound translation factors. This is Large ribosomal subunit protein uL10 from Sulfurovum sp. (strain NBC37-1).